The primary structure comprises 141 residues: Putative inactive deoxyuridine 5'-triphosphate nucleotidohydrolase-like protein FLJ16323 (141 aa).

The protein belongs to the dUTPase family.

The protein is Putative inactive deoxyuridine 5'-triphosphate nucleotidohydrolase-like protein FLJ16323 of Homo sapiens (Human).